Here is a 153-residue protein sequence, read N- to C-terminus: Nucleoside diphosphate kinase (153 aa).

Residues Lys13, Phe61, Arg89, Thr95, Arg106, and Asn116 each coordinate ATP. Thr95 carries the post-translational modification Phosphothreonine. His119 serves as the catalytic Pros-phosphohistidine intermediate.

It belongs to the NDK family. In terms of assembly, homohexamer and homotetramer. Interacts with TOM40 preferentially in an unfolded, unphosphorylated form. Mg(2+) is required as a cofactor. The N-terminus is blocked.

The protein resides in the cytoplasm. Its subcellular location is the mitochondrion intermembrane space. The catalysed reaction is a 2'-deoxyribonucleoside 5'-diphosphate + ATP = a 2'-deoxyribonucleoside 5'-triphosphate + ADP. It catalyses the reaction a ribonucleoside 5'-diphosphate + ATP = a ribonucleoside 5'-triphosphate + ADP. Major role in the synthesis of nucleoside triphosphates other than ATP. The ATP gamma phosphate is transferred to the NDP beta phosphate via a ping-pong mechanism, using a phosphorylated active-site intermediate. Required for repair of UV radiation- and etoposide-induced DNA damage. This is Nucleoside diphosphate kinase (YNK1) from Saccharomyces cerevisiae (strain ATCC 204508 / S288c) (Baker's yeast).